Reading from the N-terminus, the 1145-residue chain is Protocadherin-19 (1145 aa).

The signal sequence occupies residues 1–21; sequence MESLLLPVLLLLAVLWTQAAA. Cadherin domains follow at residues 22–129, 130–238, 239–346, 350–453, 454–563, and 569–672; these read LINL…APSF, PAAQ…NPVF, GEST…PPII, SVNS…HPHF, SKPY…TPVI, and INGT…QESM. Topologically, residues 22 to 678 are extracellular; that stretch reads LINLKYSVEE…QESMGSVNLS (657 aa). Positions 31, 32, 88, and 90 each coordinate Ca(2+). A disulfide bond links Cys-93 and Cys-99. Residues Asp-121, Asn-123, Asp-124, Asn-125, Glu-140, Asp-155, Asp-157, Glu-199, Asp-212, Asp-230, Ser-231, Asn-232, Asp-233, Asn-234, and Glu-249 each contribute to the Ca(2+) site. A glycan (N-linked (GlcNAc...) asparagine) is linked at Asn-261. Residues Asp-264, Asp-266, Asn-270, Asp-305, Glu-307, Asp-338, Asn-340, Asp-341, Asn-342, Glu-360, Asp-375, Asp-377, Asn-381, Asp-412, and Glu-414 each coordinate Ca(2+). Asn-420 carries N-linked (GlcNAc...) asparagine glycosylation. Ca(2+)-binding residues include Asp-427, Asp-445, Glu-446, Asn-447, Asp-448, Asn-449, Glu-464, Asp-479, Asp-481, Asn-485, Asn-522, Glu-524, and Asp-537. N-linked (GlcNAc...) asparagine glycosylation occurs at Asn-485. A glycan (N-linked (GlcNAc...) asparagine) is linked at Asn-546. Ca(2+) is bound by residues Asp-555, Val-556, Asn-557, Asp-558, and Asn-559. Residue Asn-570 is glycosylated (N-linked (GlcNAc...) asparagine). Asp-594, Asp-596, Asn-600, and Asp-646 together coordinate Ca(2+). Asn-676 carries N-linked (GlcNAc...) asparagine glycosylation. A helical transmembrane segment spans residues 679–699; that stretch reads LIFIIALGSIAGILFVTMIFV. The Cytoplasmic segment spans residues 700–1145; sequence AIKCKRDNKE…SVKRLKDIVL (446 aa). 2 disordered regions span residues 901–921 and 1094–1145; these read GNSLKDSGHEESDQTDSEHDV and LEHH…DIVL. Composition is skewed to basic and acidic residues over residues 906-921 and 1106-1145; these read DSGHEESDQTDSEHDV and SEAEPRGADNEKVMHEVNPIRKDGRDKESPSVKRLKDIVL.

In terms of assembly, homodimer; antiparallel.

It localises to the cell membrane. Its function is as follows. Calcium-dependent cell-adhesion protein. This chain is Protocadherin-19 (Pcdh19), found in Mus musculus (Mouse).